The primary structure comprises 191 residues: Dephospho-CoA kinase (191 aa).

The DPCK domain occupies 3 to 191 (AIGITGSYAS…KLIKDLECRV (189 aa)). Position 11 to 16 (11 to 16 (ASGKTF)) interacts with ATP.

This sequence belongs to the CoaE family.

It is found in the cytoplasm. The catalysed reaction is 3'-dephospho-CoA + ATP = ADP + CoA + H(+). It participates in cofactor biosynthesis; coenzyme A biosynthesis; CoA from (R)-pantothenate: step 5/5. Functionally, catalyzes the phosphorylation of the 3'-hydroxyl group of dephosphocoenzyme A to form coenzyme A. This is Dephospho-CoA kinase from Rickettsia prowazekii (strain Madrid E).